The primary structure comprises 465 residues: ATP-dependent protease ATPase subunit HslU (465 aa).

Residues Val18, 60–65 (GVGKTE), Asp277, Glu342, and Arg414 contribute to the ATP site.

Belongs to the ClpX chaperone family. HslU subfamily. In terms of assembly, a double ring-shaped homohexamer of HslV is capped on each side by a ring-shaped HslU homohexamer. The assembly of the HslU/HslV complex is dependent on binding of ATP.

The protein resides in the cytoplasm. ATPase subunit of a proteasome-like degradation complex; this subunit has chaperone activity. The binding of ATP and its subsequent hydrolysis by HslU are essential for unfolding of protein substrates subsequently hydrolyzed by HslV. HslU recognizes the N-terminal part of its protein substrates and unfolds these before they are guided to HslV for hydrolysis. The sequence is that of ATP-dependent protease ATPase subunit HslU from Caldicellulosiruptor saccharolyticus (strain ATCC 43494 / DSM 8903 / Tp8T 6331).